The primary structure comprises 94 residues: Protein canopy homolog 1 (94 aa).

It belongs to the canopy family.

This chain is Protein canopy homolog 1 (Cnpy1), found in Mus musculus (Mouse).